A 340-amino-acid chain; its full sequence is Protein-arginine kinase (340 aa).

A Phosphagen kinase C-terminal domain is found at 21–242 (VVLSSRIRLA…EQIIMQERVA (222 aa)). Residues 24–28 (SSRIR), histidine 79, arginine 113, 164–168 (RASVM), and 195–200 (RGIYGE) contribute to the ATP site.

The protein belongs to the ATP:guanido phosphotransferase family.

It carries out the reaction L-arginyl-[protein] + ATP = N(omega)-phospho-L-arginyl-[protein] + ADP + H(+). In terms of biological role, catalyzes the specific phosphorylation of arginine residues in proteins. The chain is Protein-arginine kinase from Listeria innocua serovar 6a (strain ATCC BAA-680 / CLIP 11262).